The sequence spans 463 residues: Elongation factor 1-alpha 1 (463 aa).

The tr-type G domain occupies K5–T242. Residues G14–S21 form a G1 region. G14–S21 contacts GTP. Positions G70–D74 are G2. Residues D91–G94 are G3. GTP-binding positions include D91–H95 and N153–D156. The segment at N153–D156 is G4. Residues S194 to W196 are G5. A 5-glutamyl glycerylphosphorylethanolamine mark is found at E301 and E374.

This sequence belongs to the TRAFAC class translation factor GTPase superfamily. Classic translation factor GTPase family. EF-Tu/EF-1A subfamily.

The protein resides in the cytoplasm. In terms of biological role, this protein promotes the GTP-dependent binding of aminoacyl-tRNA to the A-site of ribosomes during protein biosynthesis. The protein is Elongation factor 1-alpha 1 of Drosophila melanogaster (Fruit fly).